The primary structure comprises 185 residues: MLTQIKQDAQTRMTKSIDALRHSLTTVRTGRASPALLDGIKVKAYGTDTPLNQVASISVSEGRSLVISLFDKGMIKDVEKAIYASDLGLTPTVVGTVIRLNLPPLTEERRKELSKSVHGEGEDSKVAIRNIRRDANQQVKDLLKDKAVTEDEARGAEDDIQKLTDKAIKDVDEVVKAKEQELMTV.

Belongs to the RRF family.

It is found in the cytoplasm. Its function is as follows. Responsible for the release of ribosomes from messenger RNA at the termination of protein biosynthesis. May increase the efficiency of translation by recycling ribosomes from one round of translation to another. The sequence is that of Ribosome-recycling factor from Xanthomonas oryzae pv. oryzae (strain MAFF 311018).